Here is a 621-residue protein sequence, read N- to C-terminus: Cyclic nucleotide-gated ion channel 11 (621 aa).

Over 1–43 (MNLQRRKFVRLDSTGVDGKLKSVRGRLKKVYGKMKTLENWRKT) the chain is Cytoplasmic. Residues 44 to 64 (VLLACVVALAIDPLFLFIPLI) traverse the membrane as a helical segment. At 65 to 76 (DSQRFCFTFDKT) the chain is on the extracellular side. The helical transmembrane segment at 77–97 (LVAVVCVIRTFIDTFYVIHII) threads the bilayer. Residues 98-128 (YYLITETIAPRSQASLRGEIVVHSKATLKTR) are Cytoplasmic-facing. A helical transmembrane segment spans residues 129–149 (LLFHFIVDIISVLPIPQVVVL). The Extracellular segment spans residues 150-162 (TLIPLSASLVSER). The helical transmembrane segment at 163-183 (ILKWIILSQYVPRIIRMYPLY) threads the bilayer. At 184 to 198 (KEVTRAFGTVAESKR) the chain is on the cytoplasmic side. Residues 199 to 219 (VGAALNFFLYMLHSYVCGAFW) form a helical membrane-spanning segment. Residues 220-329 (YLSSIERKST…QNLETSNSAG (110 aa)) lie on the Extracellular side of the membrane. A helical membrane pass occupies residues 330 to 350 (EIFFAIIICVSGLLLFAVLIG). Residues 351–621 (NVQKYLQSST…KLNLGAAIYA (271 aa)) are Cytoplasmic-facing. A nucleoside 3',5'-cyclic phosphate is bound by residues 435–556 (LLQA…HSKQ) and Asp506. The calmodulin-binding stretch occupies residues 549–564 (YRRLHSKQLQHMFRFY). In terms of domain architecture, IQ spans 569-598 (QTWAACFIQAAWKRHCRRKLSKALREEEGK).

Belongs to the cyclic nucleotide-gated cation channel (TC 1.A.1.5) family. Homotetramer or heterotetramer.

It localises to the cell membrane. Functionally, putative cyclic nucleotide-gated ion channel. The protein is Cyclic nucleotide-gated ion channel 11 (CNGC11) of Arabidopsis thaliana (Mouse-ear cress).